The primary structure comprises 395 residues: Flagellin A (395 aa).

It belongs to the bacterial flagellin family.

The protein resides in the secreted. The protein localises to the bacterial flagellum. Its function is as follows. Flagellin is the subunit protein which polymerizes to form the filaments of bacterial flagella. Homomer of FlaA is able to form a functional filament. The chain is Flagellin A (flaA) from Rhizobium meliloti (Ensifer meliloti).